A 146-amino-acid polypeptide reads, in one-letter code: Hemoglobin subunit beta (146 aa).

V1 carries the post-translational modification N-acetylvaline. One can recognise a Globin domain in the interval 2 to 146 (HLTGEEKAAV…VANALAHKYH (145 aa)). A Phosphothreonine modification is found at T12. Position 44 is a phosphoserine (S44). An N6-acetyllysine modification is found at K59. H63 is a heme b binding site. At K82 the chain carries N6-acetyllysine. H92 is a heme b binding site. C93 carries the post-translational modification S-nitrosocysteine. At K144 the chain carries N6-acetyllysine.

This sequence belongs to the globin family. In terms of assembly, heterotetramer of two alpha chains and two beta chains. As to expression, red blood cells.

In terms of biological role, involved in oxygen transport from the lung to the various peripheral tissues. This Mustela putorius furo (European domestic ferret) protein is Hemoglobin subunit beta (HBB).